The sequence spans 144 residues: Large ribosomal subunit protein uL15 (144 aa).

Residues 1–44 (MNLNELQPAAGSRHVRNRVGRGTSSGNGKTSGRGQKGQKARGKV) are disordered. A compositionally biased stretch (gly residues) spans 23-35 (TSSGNGKTSGRGQ).

The protein belongs to the universal ribosomal protein uL15 family. In terms of assembly, part of the 50S ribosomal subunit.

Functionally, binds to the 23S rRNA. This is Large ribosomal subunit protein uL15 from Leuconostoc mesenteroides subsp. mesenteroides (strain ATCC 8293 / DSM 20343 / BCRC 11652 / CCM 1803 / JCM 6124 / NCDO 523 / NBRC 100496 / NCIMB 8023 / NCTC 12954 / NRRL B-1118 / 37Y).